The following is a 1355-amino-acid chain: DNA-directed RNA polymerase subunit beta' (1355 aa).

4 residues coordinate Zn(2+): Cys-219, Cys-293, Cys-300, and Cys-303. Residues 1331-1355 (AEVEVDDEVDDDYEDDDEDDDDYED) are disordered.

It belongs to the RNA polymerase beta' chain family. RpoC2 subfamily. In cyanobacteria the RNAP catalytic core is composed of 2 alpha, 1 beta, 1 beta', 1 gamma and 1 omega subunit. When a sigma factor is associated with the core the holoenzyme is formed, which can initiate transcription. Zn(2+) is required as a cofactor.

It catalyses the reaction RNA(n) + a ribonucleoside 5'-triphosphate = RNA(n+1) + diphosphate. Its function is as follows. DNA-dependent RNA polymerase catalyzes the transcription of DNA into RNA using the four ribonucleoside triphosphates as substrates. This Nostoc sp. (strain PCC 7120 / SAG 25.82 / UTEX 2576) protein is DNA-directed RNA polymerase subunit beta'.